Consider the following 313-residue polypeptide: Small ribosomal subunit biogenesis GTPase RsgA (313 aa).

The region spanning 80 to 237 is the CP-type G domain; it reads KVALRQVIVS…LIDTPGIKEF (158 aa). GTP-binding positions include 129–132 and 180–188; these read NKVD and GQSGVGKSS. The Zn(2+) site is built by Cys261, Cys266, His268, and Cys274.

This sequence belongs to the TRAFAC class YlqF/YawG GTPase family. RsgA subfamily. Monomer. Associates with 30S ribosomal subunit, binds 16S rRNA. The cofactor is Zn(2+).

It is found in the cytoplasm. Its function is as follows. One of several proteins that assist in the late maturation steps of the functional core of the 30S ribosomal subunit. Helps release RbfA from mature subunits. May play a role in the assembly of ribosomal proteins into the subunit. Circularly permuted GTPase that catalyzes slow GTP hydrolysis, GTPase activity is stimulated by the 30S ribosomal subunit. This Borrelia recurrentis (strain A1) protein is Small ribosomal subunit biogenesis GTPase RsgA.